A 311-amino-acid polypeptide reads, in one-letter code: Bifunctional protein FolD (311 aa).

174 to 176 (GKG) contacts NADP(+).

This sequence belongs to the tetrahydrofolate dehydrogenase/cyclohydrolase family. In terms of assembly, homodimer.

It carries out the reaction (6R)-5,10-methylene-5,6,7,8-tetrahydrofolate + NADP(+) = (6R)-5,10-methenyltetrahydrofolate + NADPH. The enzyme catalyses (6R)-5,10-methenyltetrahydrofolate + H2O = (6R)-10-formyltetrahydrofolate + H(+). Its pathway is one-carbon metabolism; tetrahydrofolate interconversion. Its function is as follows. Catalyzes the oxidation of 5,10-methylenetetrahydrofolate to 5,10-methenyltetrahydrofolate and then the hydrolysis of 5,10-methenyltetrahydrofolate to 10-formyltetrahydrofolate. This Pyrobaculum neutrophilum (strain DSM 2338 / JCM 9278 / NBRC 100436 / V24Sta) (Thermoproteus neutrophilus) protein is Bifunctional protein FolD.